Reading from the N-terminus, the 173-residue chain is Photosystem I assembly protein Ycf3 (173 aa).

TPR repeat units lie at residues alanine 35 to proline 68, serine 72 to methionine 105, and glycine 120 to asparagine 153.

The protein belongs to the Ycf3 family.

It localises to the cellular thylakoid membrane. Its function is as follows. Essential for the assembly of the photosystem I (PSI) complex. May act as a chaperone-like factor to guide the assembly of the PSI subunits. The sequence is that of Photosystem I assembly protein Ycf3 from Microcystis aeruginosa (strain NIES-843 / IAM M-2473).